A 137-amino-acid chain; its full sequence is Crustacean hyperglycemic hormones (137 aa).

The first 28 residues, 1 to 28, serve as a signal peptide directing secretion; sequence MVSFRTMWSLVVVVVVVAASLGSSGVHG. Glutamine 64 is modified (pyrrolidone carboxylic acid). Phenylalanine 66 is subject to D-phenylalanine; in form CHH-II. Disulfide bonds link cysteine 70–cysteine 106, cysteine 86–cysteine 102, and cysteine 89–cysteine 115. Valine 135 is modified (valine amide).

This sequence belongs to the arthropod CHH/MIH/GIH/VIH hormone family. Produced by the medulla terminalis X-organ in the eyestalks and transported to the sinus gland where they are stored and released.

It is found in the secreted. Functionally, hormone found in the sinus gland of isopods and decapods which controls the blood sugar level. Has a secretagogue action over the amylase released from the midgut gland. May act as a stress hormone and may be involved in the control of molting and reproduction. This chain is Crustacean hyperglycemic hormones, found in Procambarus clarkii (Red swamp crayfish).